A 450-amino-acid chain; its full sequence is Chromosomal replication initiator protein DnaA (450 aa).

The interval 1-71 (MEDVWLQAQS…SVRSLTDSHF (71 aa)) is domain I, interacts with DnaA modulators. Positions 71-113 (FQVELQVAARQQEKTAKSPRKSHTEDELGPVESEKCAPAEFST) are domain II. The interval 82–103 (QEKTAKSPRKSHTEDELGPVES) is disordered. Residues 114–330 (NLNAKYTFDT…GMLIRLGAVA (217 aa)) are domain III, AAA+ region. Positions 158, 160, 161, and 162 each coordinate ATP. The segment at 331 to 450 (SLTGKNITLD…IETLRKGLLN (120 aa)) is domain IV, binds dsDNA.

Belongs to the DnaA family. In terms of assembly, oligomerizes as a right-handed, spiral filament on DNA at oriC.

The protein resides in the cytoplasm. In terms of biological role, plays an essential role in the initiation and regulation of chromosomal replication. ATP-DnaA binds to the origin of replication (oriC) to initiate formation of the DNA replication initiation complex once per cell cycle. Binds the DnaA box (a 9 base pair repeat at the origin) and separates the double-stranded (ds)DNA. Forms a right-handed helical filament on oriC DNA; dsDNA binds to the exterior of the filament while single-stranded (ss)DNA is stabiized in the filament's interior. The ATP-DnaA-oriC complex binds and stabilizes one strand of the AT-rich DNA unwinding element (DUE), permitting loading of DNA polymerase. After initiation quickly degrades to an ADP-DnaA complex that is not apt for DNA replication. Binds acidic phospholipids. The protein is Chromosomal replication initiator protein DnaA of Geobacter metallireducens (strain ATCC 53774 / DSM 7210 / GS-15).